A 310-amino-acid chain; its full sequence is MRVIFMGTPDFSVGTLEAIIEAGHEVALVVTQPDKPKGRGKTMQYTPVKECALSHGIEVFQPVKIRETANIEYLRKFNADIIIVVAFGQILSKSILDMPRYGCINVHASLLPKYRGAAPIQWAVINGDEFTGVTTMRMDEGVDTGDMIAKSTVRLAPDETGGSLFDKLSAEGAKLCVETMKMIEDGTAEYTPQNSEEATHTSMISKELGFIDWTKPAVEIERLIRGLNPWPSAYTHLNGKTFKVWSAKVIDGSDDYEPGCIYHIGKNDMYVQTGKGALSLVEVQLQGKKRMDTGSFLRGCHVEEGSFFTL.

Position 109–112 (109–112 (SLLP)) interacts with (6S)-5,6,7,8-tetrahydrofolate.

This sequence belongs to the Fmt family.

The enzyme catalyses L-methionyl-tRNA(fMet) + (6R)-10-formyltetrahydrofolate = N-formyl-L-methionyl-tRNA(fMet) + (6S)-5,6,7,8-tetrahydrofolate + H(+). Its function is as follows. Attaches a formyl group to the free amino group of methionyl-tRNA(fMet). The formyl group appears to play a dual role in the initiator identity of N-formylmethionyl-tRNA by promoting its recognition by IF2 and preventing the misappropriation of this tRNA by the elongation apparatus. The sequence is that of Methionyl-tRNA formyltransferase from Agathobacter rectalis (strain ATCC 33656 / DSM 3377 / JCM 17463 / KCTC 5835 / VPI 0990) (Eubacterium rectale).